A 124-amino-acid polypeptide reads, in one-letter code: Small ribosomal subunit protein uS13 (124 aa).

Positions 94–124 are disordered; that stretch reads RGMPVRGQRTKTNARTRKGPKRTIAGKKKAR.

This sequence belongs to the universal ribosomal protein uS13 family. In terms of assembly, part of the 30S ribosomal subunit. Forms a loose heterodimer with protein S19. Forms two bridges to the 50S subunit in the 70S ribosome.

Functionally, located at the top of the head of the 30S subunit, it contacts several helices of the 16S rRNA. In the 70S ribosome it contacts the 23S rRNA (bridge B1a) and protein L5 of the 50S subunit (bridge B1b), connecting the 2 subunits; these bridges are implicated in subunit movement. Contacts the tRNAs in the A and P-sites. The sequence is that of Small ribosomal subunit protein uS13 from Mycobacterium tuberculosis (strain ATCC 25177 / H37Ra).